Consider the following 513-residue polypeptide: ATP synthase subunit alpha (513 aa).

169 to 176 provides a ligand contact to ATP; it reads GDRQTGKT.

Belongs to the ATPase alpha/beta chains family. F-type ATPases have 2 components, CF(1) - the catalytic core - and CF(0) - the membrane proton channel. CF(1) has five subunits: alpha(3), beta(3), gamma(1), delta(1), epsilon(1). CF(0) has three main subunits: a(1), b(2) and c(9-12). The alpha and beta chains form an alternating ring which encloses part of the gamma chain. CF(1) is attached to CF(0) by a central stalk formed by the gamma and epsilon chains, while a peripheral stalk is formed by the delta and b chains.

The protein localises to the cell inner membrane. The enzyme catalyses ATP + H2O + 4 H(+)(in) = ADP + phosphate + 5 H(+)(out). In terms of biological role, produces ATP from ADP in the presence of a proton gradient across the membrane. The alpha chain is a regulatory subunit. This Haemophilus ducreyi (strain 35000HP / ATCC 700724) protein is ATP synthase subunit alpha.